Consider the following 393-residue polypeptide: NAD(P)H-quinone oxidoreductase subunit H, chloroplastic (393 aa).

It belongs to the complex I 49 kDa subunit family. As to quaternary structure, NDH is composed of at least 16 different subunits, 5 of which are encoded in the nucleus.

Its subcellular location is the plastid. The protein localises to the chloroplast thylakoid membrane. It carries out the reaction a plastoquinone + NADH + (n+1) H(+)(in) = a plastoquinol + NAD(+) + n H(+)(out). The enzyme catalyses a plastoquinone + NADPH + (n+1) H(+)(in) = a plastoquinol + NADP(+) + n H(+)(out). Its function is as follows. NDH shuttles electrons from NAD(P)H:plastoquinone, via FMN and iron-sulfur (Fe-S) centers, to quinones in the photosynthetic chain and possibly in a chloroplast respiratory chain. The immediate electron acceptor for the enzyme in this species is believed to be plastoquinone. Couples the redox reaction to proton translocation, and thus conserves the redox energy in a proton gradient. This Zygnema circumcarinatum (Green alga) protein is NAD(P)H-quinone oxidoreductase subunit H, chloroplastic.